A 48-amino-acid polypeptide reads, in one-letter code: Large ribosomal subunit protein bL33B (48 aa).

It belongs to the bacterial ribosomal protein bL33 family.

This chain is Large ribosomal subunit protein bL33B, found in Lactococcus lactis subsp. cremoris (strain MG1363).